Consider the following 358-residue polypeptide: Methylthioribose-1-phosphate isomerase (358 aa).

M1 bears the N-acetylmethionine mark. Residue D248 is the Proton donor of the active site.

Belongs to the eIF-2B alpha/beta/delta subunits family. MtnA subfamily.

It is found in the cytoplasm. Its subcellular location is the nucleus. The enzyme catalyses 5-(methylsulfanyl)-alpha-D-ribose 1-phosphate = 5-(methylsulfanyl)-D-ribulose 1-phosphate. It functions in the pathway amino-acid biosynthesis; L-methionine biosynthesis via salvage pathway; L-methionine from S-methyl-5-thio-alpha-D-ribose 1-phosphate: step 1/6. Its function is as follows. Catalyzes the interconversion of methylthioribose-1-phosphate (MTR-1-P) into methylthioribulose-1-phosphate (MTRu-1-P). The sequence is that of Methylthioribose-1-phosphate isomerase from Bos taurus (Bovine).